The primary structure comprises 848 residues: Adenylate cyclase (848 aa).

The catalytic stretch occupies residues 1–535 (MYLYIETLKQ…DISHHFPLRL (535 aa)). Residues 541 to 848 (KALYSPCEIR…SQPAQQFQLH (308 aa)) form a regulatory region.

This sequence belongs to the adenylyl cyclase class-1 family.

The protein resides in the cytoplasm. It catalyses the reaction ATP = 3',5'-cyclic AMP + diphosphate. The regulatory domain is involved in the regulation of cyclase activity by the carbon source. The sequence is that of Adenylate cyclase (cya) from Yersinia intermedia.